A 67-amino-acid polypeptide reads, in one-letter code: Spiniferin (67 aa).

The signal sequence occupies residues 1–23 (MKTQLAILLITLVLFQMFSQSDA). L36 carries the leucine amide modification. A propeptide spanning residues 40–67 (GLNDLSDLDELFDGEISKADLDFLREIM) is cleaved from the precursor.

Belongs to the non-disulfide-bridged peptide (NDBP) superfamily. Short antimicrobial peptide (group 4) family. As to expression, expressed by the venom gland.

The protein resides in the secreted. The protein localises to the target cell membrane. Alpha-helical and amphipathic peptide with weak antimicrobial activities against both Gram-positive (MIC=41 uM to &gt;82 uM) and Gram-negative (MIC&gt;82 uM) bacteria. It has extremely weak hemolytic activity against human erythrocytes. This Heterometrus spinifer (Asia giant forest scorpion) protein is Spiniferin.